The sequence spans 54 residues: Large ribosomal subunit protein bL33 (54 aa).

The protein belongs to the bacterial ribosomal protein bL33 family.

This Parafrankia sp. (strain EAN1pec) protein is Large ribosomal subunit protein bL33.